The following is a 101-amino-acid chain: Small ribosomal subunit protein uS10 (101 aa).

This sequence belongs to the universal ribosomal protein uS10 family. Part of the 30S ribosomal subunit.

Its function is as follows. Involved in the binding of tRNA to the ribosomes. The chain is Small ribosomal subunit protein uS10 from Mycobacteroides abscessus (strain ATCC 19977 / DSM 44196 / CCUG 20993 / CIP 104536 / JCM 13569 / NCTC 13031 / TMC 1543 / L948) (Mycobacterium abscessus).